The following is a 426-amino-acid chain: MQKNIKNVSETEQELEIILSAEEFGTEYNQELEEAKRNIQIKGFRKGHAPASLIKKLAGPSIEATVAEKMASKYFGEIADAEKIKPASRAQIIDVAFAPEELKITLAYEIHPEFEVKDFSGYTFTQNRYVITDEDITREINLILKGHGTLNTVDEAALSTDTVIGDVYKLNEAGETDDDQKTDNHHFTLEYLPEENPFRKALTGKKAGESVDIENDEKESAQPSRFRVVISEIKRLELPELTDELVKEITGGRFESVTDFTADVRIQLEQHFLLKSDEELLESLSAKLIEENPVPAPNSMIASFSKMLLENAKRQMGGSFPKGFDDEQFRLAMKPNAEKHAQWLMISQKIAEDATLSVSDDDIKAYADKEAEKSESMDAEEILKTYLSPEFRDYITDTILKEKIYNIIKSKVTITEEEKSIPVRQE.

Residues 165–239 (GDVYKLNEAG…ISEIKRLELP (75 aa)) form the PPIase FKBP-type domain.

It belongs to the FKBP-type PPIase family. Tig subfamily.

The protein resides in the cytoplasm. It catalyses the reaction [protein]-peptidylproline (omega=180) = [protein]-peptidylproline (omega=0). Its function is as follows. Involved in protein export. Acts as a chaperone by maintaining the newly synthesized protein in an open conformation. Functions as a peptidyl-prolyl cis-trans isomerase. This is Trigger factor from Pelodictyon phaeoclathratiforme (strain DSM 5477 / BU-1).